A 299-amino-acid polypeptide reads, in one-letter code: Trimeric intracellular cation channel type A (299 aa).

The Lumenal portion of the chain corresponds to 1 to 18 (MELLSALSLGELALSFSR). A helical membrane pass occupies residues 19–39 (VPLFPVFDLSYFIVSILYLKY). Over 40–51 (EPGAVELSRRHP) the chain is Cytoplasmic. Residues 52–72 (IASWLCAMLHCFGSYILADLL) form a helical membrane-spanning segment. The Lumenal portion of the chain corresponds to 73 to 85 (LGEPLIDYFSNNS). Gly-74 is a Ca(2+) binding site. A helical transmembrane segment spans residues 86 to 106 (SILLASAVWYLIFFCPLDLFY). At 107 to 144 (KCVCFLPVKLIFVAMKEVVRVRKIAVGIHHAHHHYHHG) the chain is on the cytoplasmic side. A 1,2-diacyl-sn-glycero-3-phospho-(1D-myo-inositol-4,5-bisphosphate)-binding residues include Lys-122 and Arg-126. Residues 145 to 165 (WFVMIATGWVKGSGVALMSNF) traverse the membrane as a helical segment. At 166–178 (EQLLRGVWKPETN) the chain is on the lumenal side. The chain crosses the membrane as a helical span at residues 179–199 (EILHMSFPTKASLYGAILFTL). Over 200–209 (QQTRWLPVSK) the chain is Cytoplasmic. Residues 210 to 230 (ASLIFIFTLFMVSCKVFLTAT) traverse the membrane as a helical segment. Residues 231 to 234 (HSHS) are Lumenal-facing. A helical membrane pass occupies residues 235 to 255 (SPFDALEGYICPVLFGSACGG). Residues 256 to 299 (DHHHDNHGGSHSGGGPGAQHSAMPAKSKEELSEGSRKKKAKKAD) lie on the Cytoplasmic side of the membrane. Residues 260 to 299 (DNHGGSHSGGGPGAQHSAMPAKSKEELSEGSRKKKAKKAD) form a disordered region. Residues 281–290 (KSKEELSEGS) are compositionally biased toward basic and acidic residues.

The protein belongs to the TMEM38 family. As to quaternary structure, homotrimer; conformation seems to be controled by binding to diacylglycerol (DAG).

Its subcellular location is the sarcoplasmic reticulum membrane. The protein resides in the nucleus membrane. The enzyme catalyses K(+)(in) = K(+)(out). Channel activity is activated by a change of voltage within the sarcoplasmic reticulum lumen and blocked by luminal high Ca(2+) levels. In terms of biological role, intracellular monovalent cation channel required for maintenance of rapid intracellular calcium release. Acts as a potassium counter-ion channel that functions in synchronization with calcium release from intracellular stores. Opened by a change of voltage within the sarcoplasmic reticulum lumen. This Homo sapiens (Human) protein is Trimeric intracellular cation channel type A.